Here is a 348-residue protein sequence, read N- to C-terminus: MSGMKKNIVVQNELVQVKGRVKAITIKKEDFNEFLKLTTLRVFNKSYDVLMPPIDDMKKNTIDLNGLTIVTQNYLSLLLYQSGATSPSTTAQINLSTSSGSPVTLQYSSKINSNSQGLMVLLQIFEANGNLTFQYYFIGFDTTNSSYSATQAELYASAWVNTSNTGNYCASVNPVTMYTNLVRIAYTNISITKSATEYLFMVWLIEFENVPSYAPFAVPIFANALNLAPIAESTACGSPPPSSVTIYFYNGNCNFTCGGNCPNGGLSSFVEYIQNNALTVEFPLQAPIQGGASNPEVFICTTLNFTYTNSTSVITQISGNESTTVTPPVSGATFYVAIVTISITYTVS.

This is an uncharacterized protein from Sulfolobus islandicus filamentous virus (isolate Iceland/Hveragerdi) (SIFV).